Here is a 524-residue protein sequence, read N- to C-terminus: MSAVLKQRIRYKPYLDKIRTAAQCVDLFGAKPNQYIGWSGFTGVGAPKVVPDAVSKHVEENNLQGHENWRYNLFVGASAGMEIESRWANNNMIARRSPHQVGKPIAAAINEGRTDFFDKHLSMWAQDLTYGFYTRDKKENSLDIAVIEATAITEDGHLIPGPAVGASPEIVHMADKIIIELNTKTPSFEGLHDINMPVLPPFRQPYQITDVSQKMGTPYIPLDPSKVVAIVESEFADVVGANSPADEGSKAIAANLIELFQQEVKAGRLPENLLPLQSGIGNIANAVVEGLADASFKDLNVWTEVLQDSFLDFFESGNLNFATATSIRLTEDGFKRFFDNWDEFSKKLLLRSQVVSNNPEIIRRLGVIAMNTPVEVDIYAHANSTCVNGSKMLHGLGGSGDFLRNAKLSIMHTPSARPSKTDPLGISCIVPFATHIDQTEHDLDIVVTEQGLADLRGLSPKERSREMINKCAHPSYRDQLLAYVEQAEFECAKSRSLHEPHVLKNAFKMHTNLAENGTMRLDKW.

279–283 (GIGNI) is a binding site for CoA. Residue E304 is the 5-glutamyl coenzyme A thioester intermediate of the active site. CoA is bound at residue G398.

This sequence belongs to the acetyl-CoA hydrolase/transferase family.

It localises to the cytoplasm. The catalysed reaction is acetyl-CoA + H2O = acetate + CoA + H(+). Functionally, presumably involved in regulating the intracellular acetyl-CoA pool for fatty acid and cholesterol synthesis and fatty acid oxidation. This is Acetyl-CoA hydrolase (ACH1) from Yarrowia lipolytica (strain CLIB 122 / E 150) (Yeast).